Reading from the N-terminus, the 210-residue chain is Tetraspanin-31 (210 aa).

The Cytoplasmic portion of the chain corresponds to 1-12 (MVCGGFACSRNA). A helical transmembrane segment spans residues 13–33 (LCALNVVYMLVGFLLIGVAAW). At 34–44 (GKGLGVVSSIH) the chain is on the extracellular side. The helical transmembrane segment at 45 to 65 (IIGGVIAVGVFLLLIAVAGLV) threads the bilayer. The Cytoplasmic segment spans residues 66–72 (GAANHHQ). The chain crosses the membrane as a helical span at residues 73–93 (VLLFFYMIILGLVFIFQFGIS). At 94–173 (CSCLAINRNT…FLKHSDKALK (80 aa)) the chain is on the extracellular side. 3 N-linked (GlcNAc...) asparagine glycosylation sites follow: N109, N117, and N134. A helical transmembrane segment spans residues 174-194 (ILGGVGLFFSFTEILGVWLAM). Over 195 to 210 (RFRNQKDPRANPSAFL) the chain is Cytoplasmic.

The protein belongs to the tetraspanin (TM4SF) family.

It is found in the membrane. The chain is Tetraspanin-31 (Tspan31) from Mus musculus (Mouse).